The chain runs to 83 residues: Gas vesicle protein G1 (83 aa).

Belongs to the gas vesicle GvpG family. GvpF to GvpM interact with each other in vitro, and may form multi-subunit complex(es). Might interact with GvpA1.

It localises to the gas vesicle. In terms of biological role, proteins GvpF to GvpM might be involved in nucleating gas vesicle formation. A minor component of the gas vesicle. Gas vesicles are hollow, gas filled proteinaceous nanostructures found in several microbial planktonic microorganisms. They allow positioning of halobacteria at the optimal depth for growth in the poorly aerated, shallow brine pools of their habitat. Expression of a 9.5 kb p-vac DNA fragment containing 2 divergently transcribed regions (gvpD-gvpE-gvpF-gvpG-gvpH-gvpI-gvpJ-gvpK-gvpL-gvpM and gvpA-gvpC-gvpN-gvpO) allows H.volcanii to produce gas vesicles. A minimal gas vesicle can be made in H.volcanii by gvpA1-gvpO1 plus gvpF1-gvpG1-gvpJ1-gvpK1-gvpL1-gvpM1; lack of enough GvpJ1 prevents formation. A similar region restores gas vesicle production in H.halobium without the p-vac locus, but it still has the c-vac locus. This Halobacterium salinarum (strain ATCC 700922 / JCM 11081 / NRC-1) (Halobacterium halobium) protein is Gas vesicle protein G1 (gvpG11).